The following is a 677-amino-acid chain: Methionine--tRNA ligase (677 aa).

A 'HIGH' region motif is present at residues 14 to 24; sequence PYANGAIHLGH. Residues C145, C148, C158, and C161 each contribute to the Zn(2+) site. Residues 330–334 carry the 'KMSKS' region motif; the sequence is KMSKS. Position 333 (K333) interacts with ATP. Positions 576 to 677 constitute a tRNA-binding domain; that stretch reads DFAKVDLRVA…EGALPGMRVM (102 aa).

Belongs to the class-I aminoacyl-tRNA synthetase family. MetG type 1 subfamily. Homodimer. Requires Zn(2+) as cofactor.

The protein localises to the cytoplasm. The enzyme catalyses tRNA(Met) + L-methionine + ATP = L-methionyl-tRNA(Met) + AMP + diphosphate. Its function is as follows. Is required not only for elongation of protein synthesis but also for the initiation of all mRNA translation through initiator tRNA(fMet) aminoacylation. In Saccharophagus degradans (strain 2-40 / ATCC 43961 / DSM 17024), this protein is Methionine--tRNA ligase.